A 252-amino-acid polypeptide reads, in one-letter code: Imidazole glycerol phosphate synthase subunit HisF (252 aa).

Catalysis depends on residues D11 and D130.

Belongs to the HisA/HisF family. As to quaternary structure, heterodimer of HisH and HisF.

It localises to the cytoplasm. The catalysed reaction is 5-[(5-phospho-1-deoxy-D-ribulos-1-ylimino)methylamino]-1-(5-phospho-beta-D-ribosyl)imidazole-4-carboxamide + L-glutamine = D-erythro-1-(imidazol-4-yl)glycerol 3-phosphate + 5-amino-1-(5-phospho-beta-D-ribosyl)imidazole-4-carboxamide + L-glutamate + H(+). Its pathway is amino-acid biosynthesis; L-histidine biosynthesis; L-histidine from 5-phospho-alpha-D-ribose 1-diphosphate: step 5/9. Functionally, IGPS catalyzes the conversion of PRFAR and glutamine to IGP, AICAR and glutamate. The HisF subunit catalyzes the cyclization activity that produces IGP and AICAR from PRFAR using the ammonia provided by the HisH subunit. The sequence is that of Imidazole glycerol phosphate synthase subunit HisF from Desulforudis audaxviator (strain MP104C).